A 602-amino-acid polypeptide reads, in one-letter code: Elongation factor 4 (602 aa).

Residues 7-189 (KYIRNFSIVA…AIVNKVPAPE (183 aa)) enclose the tr-type G domain. Residues 19-24 (DHGKST) and 136-139 (NKID) contribute to the GTP site.

Belongs to the TRAFAC class translation factor GTPase superfamily. Classic translation factor GTPase family. LepA subfamily.

It is found in the cell membrane. It carries out the reaction GTP + H2O = GDP + phosphate + H(+). Its function is as follows. Required for accurate and efficient protein synthesis under certain stress conditions. May act as a fidelity factor of the translation reaction, by catalyzing a one-codon backward translocation of tRNAs on improperly translocated ribosomes. Back-translocation proceeds from a post-translocation (POST) complex to a pre-translocation (PRE) complex, thus giving elongation factor G a second chance to translocate the tRNAs correctly. Binds to ribosomes in a GTP-dependent manner. This Clostridium botulinum (strain Okra / Type B1) protein is Elongation factor 4.